Consider the following 181-residue polypeptide: Peptidyl-tRNA hydrolase (181 aa).

Tyr-14 serves as a coordination point for tRNA. Catalysis depends on His-19, which acts as the Proton acceptor. Positions 61, 63, and 107 each coordinate tRNA.

The protein belongs to the PTH family. As to quaternary structure, monomer.

It is found in the cytoplasm. It carries out the reaction an N-acyl-L-alpha-aminoacyl-tRNA + H2O = an N-acyl-L-amino acid + a tRNA + H(+). Functionally, hydrolyzes ribosome-free peptidyl-tRNAs (with 1 or more amino acids incorporated), which drop off the ribosome during protein synthesis, or as a result of ribosome stalling. Its function is as follows. Catalyzes the release of premature peptidyl moieties from peptidyl-tRNA molecules trapped in stalled 50S ribosomal subunits, and thus maintains levels of free tRNAs and 50S ribosomes. The polypeptide is Peptidyl-tRNA hydrolase (Campylobacter fetus subsp. fetus (strain 82-40)).